Consider the following 351-residue polypeptide: UDP-N-acetylglucosamine--N-acetylmuramyl-(pentapeptide) pyrophosphoryl-undecaprenol N-acetylglucosamine transferase (351 aa).

UDP-N-acetyl-alpha-D-glucosamine contacts are provided by residues 13–15, Asn-125, Arg-161, Ser-189, Ile-241, 260–265, and Gln-285; these read TGG and ALTVCE.

Belongs to the glycosyltransferase 28 family. MurG subfamily.

It is found in the cell inner membrane. It catalyses the reaction di-trans,octa-cis-undecaprenyl diphospho-N-acetyl-alpha-D-muramoyl-L-alanyl-D-glutamyl-meso-2,6-diaminopimeloyl-D-alanyl-D-alanine + UDP-N-acetyl-alpha-D-glucosamine = di-trans,octa-cis-undecaprenyl diphospho-[N-acetyl-alpha-D-glucosaminyl-(1-&gt;4)]-N-acetyl-alpha-D-muramoyl-L-alanyl-D-glutamyl-meso-2,6-diaminopimeloyl-D-alanyl-D-alanine + UDP + H(+). It participates in cell wall biogenesis; peptidoglycan biosynthesis. Its function is as follows. Cell wall formation. Catalyzes the transfer of a GlcNAc subunit on undecaprenyl-pyrophosphoryl-MurNAc-pentapeptide (lipid intermediate I) to form undecaprenyl-pyrophosphoryl-MurNAc-(pentapeptide)GlcNAc (lipid intermediate II). This chain is UDP-N-acetylglucosamine--N-acetylmuramyl-(pentapeptide) pyrophosphoryl-undecaprenol N-acetylglucosamine transferase, found in Haemophilus influenzae (strain ATCC 51907 / DSM 11121 / KW20 / Rd).